The following is a 245-amino-acid chain: tRNA pseudouridine synthase A (245 aa).

Asp52 acts as the Nucleophile in catalysis. Residue Tyr111 participates in substrate binding.

The protein belongs to the tRNA pseudouridine synthase TruA family. As to quaternary structure, homodimer.

It catalyses the reaction uridine(38/39/40) in tRNA = pseudouridine(38/39/40) in tRNA. Its function is as follows. Formation of pseudouridine at positions 38, 39 and 40 in the anticodon stem and loop of transfer RNAs. This Thermotoga maritima (strain ATCC 43589 / DSM 3109 / JCM 10099 / NBRC 100826 / MSB8) protein is tRNA pseudouridine synthase A.